A 118-amino-acid polypeptide reads, in one-letter code: MDCIRILWSVAVGLLLVSWRPTMFAASPTCDTVQNILAPCAGFLTGQEPSKACCTGVNNLNNSRKTKADRVAVCNCIKELTKSIAYDPKRMPLLSTKCGVKPDFPAVDKNLDCSKLPV.

A signal peptide spans 1 to 25 (MDCIRILWSVAVGLLLVSWRPTMFA). Intrachain disulfides connect cysteine 30/cysteine 76, cysteine 40/cysteine 53, cysteine 54/cysteine 98, and cysteine 74/cysteine 113.

This sequence belongs to the plant LTP family.

In terms of biological role, plant non-specific lipid-transfer proteins transfer phospholipids as well as galactolipids across membranes. May play a role in wax or cutin deposition in the cell walls of expanding epidermal cells and certain secretory tissues. In Ambrosia artemisiifolia (Common ragweed), this protein is Non-specific lipid-transfer protein.